The following is a 419-amino-acid chain: N-acylglucosamine 2-epimerase (419 aa).

The segment at L185–L206 is leucine-zipper. Residue S418 is modified to Phosphoserine.

Belongs to the N-acylglucosamine 2-epimerase family. Homodimer. Forms a heterodimer with renin and inhibits its activity. As to expression, kidney, adrenal gland, brain, lung, spleen, ovary, testis and heart.

The enzyme catalyses an N-acyl-D-glucosamine = an N-acyl-D-mannosamine. The protein operates within amino-sugar metabolism; N-acetylneuraminate degradation. Its function is as follows. Catalyzes the interconversion of N-acetylglucosamine to N-acetylmannosamine. Involved in the N-glycolylneuraminic acid (Neu5Gc) degradation pathway. The polypeptide is N-acylglucosamine 2-epimerase (Renbp) (Rattus norvegicus (Rat)).